The chain runs to 114 residues: Nucleoid-associated protein CKL_3826 (114 aa).

Belongs to the YbaB/EbfC family. Homodimer.

The protein localises to the cytoplasm. It is found in the nucleoid. Binds to DNA and alters its conformation. May be involved in regulation of gene expression, nucleoid organization and DNA protection. The protein is Nucleoid-associated protein CKL_3826 of Clostridium kluyveri (strain ATCC 8527 / DSM 555 / NBRC 12016 / NCIMB 10680 / K1).